The chain runs to 74 residues: Cytochrome c oxidase assembly factor 5 (74 aa).

In terms of domain architecture, CHCH spans 27-65; that stretch reads QSDCVVQEGKSPRQCLKEGYCNSLKYAFFECKRSVLDNR. Positions 30 to 41 match the Cx10C motif motif; it reads CVVQEGKSPRQC. 2 disulfide bridges follow: cysteine 30–cysteine 57 and cysteine 41–cysteine 47. Serine 37 is modified (phosphoserine). A Cx9C motif motif is present at residues 47–57; the sequence is CNSLKYAFFEC.

The protein belongs to the PET191 family.

Functionally, involved in an early step of the mitochondrial complex IV assembly process. The polypeptide is Cytochrome c oxidase assembly factor 5 (COA5) (Homo sapiens (Human)).